The primary structure comprises 1403 residues: Centrosomal protein of 162 kDa (1403 aa).

The tract at residues 18-42 (KELSDDSFENSDKTARQSKKEMKKK) is disordered. 2 positions are modified to phosphoserine: Ser157 and Ser160. A disordered region spans residues 170–231 (QANAELTDDE…EKISVPKQEE (62 aa)). Positions 208 to 231 (TKDEEMPSKENSKSEKISVPKQEE) are enriched in basic and acidic residues. 2 positions are modified to phosphoserine: Ser474 and Ser475. The disordered stretch occupies residues 476–504 (EEEGAVMGKQVPYKKARSAPPLLKRKPQS). The segment covering 487–502 (PYKKARSAPPLLKRKP) has biased composition (basic residues). Coiled coils occupy residues 617–670 (KRVQ…QDNY), 698–1121 (VTGE…MLSN), 1171–1206 (EVLQ…QFEN), and 1235–1386 (CQNA…LHRQ).

It belongs to the CEP162 family. As to quaternary structure, interacts with CEP290. Interacts with CPNE4. Interacts with alpha-tubulin.

Its subcellular location is the cytoplasm. The protein resides in the cytoskeleton. The protein localises to the microtubule organizing center. It localises to the centrosome. It is found in the centriole. Its subcellular location is the spindle. The protein resides in the nucleus. In terms of biological role, required to promote assembly of the transition zone in primary cilia. Acts by specifically recognizing and binding the axonemal microtubule. Localizes to the distal ends of centrioles before ciliogenesis and directly binds to axonemal microtubule, thereby promoting and restricting transition zone formation specifically at the cilia base. Required to mediate CEP290 association with microtubules. This is Centrosomal protein of 162 kDa (CEP162) from Homo sapiens (Human).